The following is a 405-amino-acid chain: Acetyl-CoA decarbonylase/synthase complex subunit delta (405 aa).

Belongs to the CdhD family. In terms of assembly, heterodimer of delta and gamma chains. The ACDS complex is made up of alpha, epsilon, beta, gamma and delta chains with a probable stoichiometry of (alpha(2)epsilon(2))(4)-beta(8)-(gamma(1)delta(1))(8).

Functionally, part of a complex that catalyzes the reversible cleavage of acetyl-CoA, allowing autotrophic growth from CO(2). Probably maintains the overall quaternary structure of the ACDS complex. The chain is Acetyl-CoA decarbonylase/synthase complex subunit delta from Methanocaldococcus jannaschii (strain ATCC 43067 / DSM 2661 / JAL-1 / JCM 10045 / NBRC 100440) (Methanococcus jannaschii).